A 591-amino-acid polypeptide reads, in one-letter code: CTP synthase 1 (591 aa).

Lys100 bears the N6-acetyllysine mark. In terms of domain architecture, Glutamine amidotransferase type-1 spans 300-554; sequence SIALVGKYTK…LASVGRLSHY (255 aa). Catalysis depends on for GATase activity residues Cys399, His526, and Glu528. Ser562, Ser568, Ser571, Ser573, Ser574, Ser575, Ser578, and Ser587 each carry phosphoserine. Positions 562 to 591 are disordered; the sequence is SPRDTYSDRSGSSSPDSEITELKFPSINHD. Low complexity predominate over residues 569 to 578; the sequence is DRSGSSSPDS.

It belongs to the CTP synthase family. In terms of tissue distribution, widely expressed.

The protein localises to the cytoplasm. It is found in the cytosol. It carries out the reaction UTP + L-glutamine + ATP + H2O = CTP + L-glutamate + ADP + phosphate + 2 H(+). It functions in the pathway pyrimidine metabolism; CTP biosynthesis via de novo pathway; CTP from UDP: step 2/2. With respect to regulation, activated by GTP and inhibited by CTP. In terms of biological role, this enzyme is involved in the de novo synthesis of CTP, a precursor of DNA, RNA and phospholipids. Catalyzes the ATP-dependent amination of UTP to CTP with either L-glutamine or ammonia as a source of nitrogen. This enzyme and its product, CTP, play a crucial role in the proliferation of activated lymphocytes and therefore in immunity. In Homo sapiens (Human), this protein is CTP synthase 1.